The chain runs to 528 residues: Arginine--tRNA ligase (528 aa).

The 'HIGH' region signature appears at 112–122 (ANPTGPLHIGH).

The protein belongs to the class-I aminoacyl-tRNA synthetase family. In terms of assembly, monomer.

The protein resides in the cytoplasm. The catalysed reaction is tRNA(Arg) + L-arginine + ATP = L-arginyl-tRNA(Arg) + AMP + diphosphate. This is Arginine--tRNA ligase from Wolinella succinogenes (strain ATCC 29543 / DSM 1740 / CCUG 13145 / JCM 31913 / LMG 7466 / NCTC 11488 / FDC 602W) (Vibrio succinogenes).